The primary structure comprises 137 residues: Peptide methionine sulfoxide reductase MsrB (137 aa).

One can recognise a MsrB domain in the interval 7–129; the sequence is AEELKKNLSE…NSASLRFTDG (123 aa). Zn(2+) is bound by residues Cys-46, Cys-49, Cys-95, and Cys-98. Cys-118 acts as the Nucleophile in catalysis.

The protein belongs to the MsrB Met sulfoxide reductase family. Zn(2+) serves as cofactor.

It catalyses the reaction L-methionyl-[protein] + [thioredoxin]-disulfide + H2O = L-methionyl-(R)-S-oxide-[protein] + [thioredoxin]-dithiol. This chain is Peptide methionine sulfoxide reductase MsrB, found in Escherichia coli O45:K1 (strain S88 / ExPEC).